The sequence spans 133 residues: Small ribosomal subunit protein uS8 (133 aa).

The interval 1–30 (MANHDPISDMLTRIRNASEKRHETTKVPAS) is disordered. Positions 16–25 (NASEKRHETT) are enriched in basic and acidic residues.

The protein belongs to the universal ribosomal protein uS8 family. In terms of assembly, part of the 30S ribosomal subunit. Contacts proteins S5 and S12.

Its function is as follows. One of the primary rRNA binding proteins, it binds directly to 16S rRNA central domain where it helps coordinate assembly of the platform of the 30S subunit. The polypeptide is Small ribosomal subunit protein uS8 (Synechococcus sp. (strain CC9902)).